A 316-amino-acid polypeptide reads, in one-letter code: ATP synthase gamma chain (316 aa).

Belongs to the ATPase gamma chain family. F-type ATPases have 2 components, CF(1) - the catalytic core - and CF(0) - the membrane proton channel. CF(1) has five subunits: alpha(3), beta(3), gamma(1), delta(1), epsilon(1). CF(0) has three main subunits: a, b and c.

The protein resides in the cellular thylakoid membrane. Functionally, produces ATP from ADP in the presence of a proton gradient across the membrane. The gamma chain is believed to be important in regulating ATPase activity and the flow of protons through the CF(0) complex. The polypeptide is ATP synthase gamma chain (Prochlorococcus marinus (strain NATL2A)).